The primary structure comprises 40 residues: Antimicrobial peptide 1 (40 aa).

A Chitin-binding type-1 domain is found at 1-40 (AQCGAQGGGATCPGGLCCSQWGWCGSTPKYCGAGCQSNCK). Disulfide bonds link Cys-3/Cys-18, Cys-12/Cys-24, Cys-17/Cys-31, and Cys-35/Cys-39.

Post-translationally, not glycosylated.

In terms of biological role, antimicrobial peptide active against plant pathogenic fungi and Gram-negative and -positive bacteria. This Fagopyrum esculentum (Common buckwheat) protein is Antimicrobial peptide 1.